Consider the following 360-residue polypeptide: Peptide chain release factor 1 (360 aa).

Gln235 bears the N5-methylglutamine mark. Positions 284–293 are enriched in basic and acidic residues; it reads HKRQQEEAST. Residues 284–305 are disordered; the sequence is HKRQQEEASTRRNLLGSGDRSD.

This sequence belongs to the prokaryotic/mitochondrial release factor family. Post-translationally, methylated by PrmC. Methylation increases the termination efficiency of RF1.

It is found in the cytoplasm. In terms of biological role, peptide chain release factor 1 directs the termination of translation in response to the peptide chain termination codons UAG and UAA. This is Peptide chain release factor 1 from Pectobacterium atrosepticum (strain SCRI 1043 / ATCC BAA-672) (Erwinia carotovora subsp. atroseptica).